The sequence spans 1059 residues: Eukaryotic translation initiation factor 3 subunit A (1059 aa).

A coiled-coil region spans residues 99-130; sequence AAEKVTAAQAKADEVQSSIEATTSNIDDLEAS. Residues 337-521 form the PCI domain; the sequence is LQRAATFVIL…GVLSFDADVF (185 aa). Residues 586–905 are a coiled coil; it reads EALARAKAGA…KAEKEKLAAT (320 aa). A compositionally biased stretch (basic and acidic residues) spans 794-902; that stretch reads RRDEFEKRRR…ARRKAEKEKL (109 aa). A disordered region spans residues 794–1059; that stretch reads RRDEFEKRRR…YVPKWRREGA (266 aa). Composition is skewed to low complexity over residues 908 to 927, 942 to 958, 965 to 988, and 1005 to 1024; these read AYRPPAAAERTEAAAPPRIA, KAASGETAAPAPAAAEP, AAAPPAERTEAAAPPRLALAGNRP, and AAAVPERSAPPLRAAAPQRA.

This sequence belongs to the eIF-3 subunit A family. Component of the eukaryotic translation initiation factor 3 (eIF-3) complex.

The protein resides in the cytoplasm. In terms of biological role, RNA-binding component of the eukaryotic translation initiation factor 3 (eIF-3) complex, which is involved in protein synthesis of a specialized repertoire of mRNAs and, together with other initiation factors, stimulates binding of mRNA and methionyl-tRNAi to the 40S ribosome. The eIF-3 complex specifically targets and initiates translation of a subset of mRNAs involved in cell proliferation. This Neurospora crassa (strain ATCC 24698 / 74-OR23-1A / CBS 708.71 / DSM 1257 / FGSC 987) protein is Eukaryotic translation initiation factor 3 subunit A (eif3a).